A 368-amino-acid chain; its full sequence is UV excision repair protein rhp23 (368 aa).

The Ubiquitin-like domain occupies M1–T77. Low complexity-rich tracts occupy residues K76–P88 and A103–S124. Residues K76–A134 are disordered. Residues S84 and S87 each carry the phosphoserine modification. UBA domains are found at residues P135–G185 and Q320–H360. S364 carries the post-translational modification Phosphoserine.

Its subcellular location is the nucleus. Involved in postreplication repair of UV-damaged DNA. Postreplication repair functions in gap-filling of a daughter strand on replication of damaged DNA. Its function is as follows. Protects ubiquitin chains against dissambly by deubiquitinating enzymes thereby promoting protein degradation. This chain is UV excision repair protein rhp23 (rhp23), found in Schizosaccharomyces pombe (strain 972 / ATCC 24843) (Fission yeast).